The chain runs to 188 residues: U1 small nuclear ribonucleoprotein C-2 (188 aa).

A Matrin-type zinc finger spans residues 4-36 (YYCDYCDVFLVSESPSVRKAHNSGRNHLTNVRD). The interval 57–188 (FETGGGNSTS…MNPDRARQLG (132 aa)) is disordered. Positions 72 to 82 (GNPPGSQPGPP) are enriched in pro residues. Over residues 109 to 124 (AMLALMNGQNGMSSPG) the composition is skewed to low complexity. Over residues 125 to 141 (SGPPPMRFAGPPIPNNM) the composition is skewed to pro residues.

The protein belongs to the U1 small nuclear ribonucleoprotein C family. As to quaternary structure, U1 snRNP is composed of the 7 core Sm proteins B/B', D1, D2, D3, E, F and G that assemble in a heptameric protein ring on the Sm site of the small nuclear RNA to form the core snRNP, and at least 3 U1 snRNP-specific proteins U1-70K, U1-A and U1-C. U1-C interacts with U1 snRNA and the 5' splice-site region of the pre-mRNA.

Its subcellular location is the nucleus. In terms of biological role, component of the spliceosomal U1 snRNP, which is essential for recognition of the pre-mRNA 5' splice-site and the subsequent assembly of the spliceosome. U1-C is directly involved in initial 5' splice-site recognition for both constitutive and regulated alternative splicing. The interaction with the 5' splice-site seems to precede base-pairing between the pre-mRNA and the U1 snRNA. Stimulates commitment or early (E) complex formation by stabilizing the base pairing of the 5' end of the U1 snRNA and the 5' splice-site region. This is U1 small nuclear ribonucleoprotein C-2 from Puccinia graminis f. sp. tritici (strain CRL 75-36-700-3 / race SCCL) (Black stem rust fungus).